The sequence spans 233 residues: Putative N-acetylmuramoyl-L-alanine amidase (233 aa).

In terms of domain architecture, MurNAc-LAA spans 1–219 (MIDPGHGGQD…IANAIYIALK (219 aa)).

It belongs to the N-acetylmuramoyl-L-alanine amidase 3 family.

The protein localises to the secreted. It carries out the reaction Hydrolyzes the link between N-acetylmuramoyl residues and L-amino acid residues in certain cell-wall glycopeptides.. Cell-wall hydrolase involved in septum cleavage during cell division. This chain is Putative N-acetylmuramoyl-L-alanine amidase (amiB), found in Buchnera aphidicola subsp. Schizaphis graminum (strain Sg).